Here is a 139-residue protein sequence, read N- to C-terminus: Putative pre-16S rRNA nuclease (139 aa).

The protein belongs to the YqgF nuclease family.

Its subcellular location is the cytoplasm. In terms of biological role, could be a nuclease involved in processing of the 5'-end of pre-16S rRNA. The protein is Putative pre-16S rRNA nuclease of Streptococcus uberis (strain ATCC BAA-854 / 0140J).